We begin with the raw amino-acid sequence, 932 residues long: DNA mismatch repair protein MutS (932 aa).

615 to 622 serves as a coordination point for ATP; it reads GPNMAGKS.

The protein belongs to the DNA mismatch repair MutS family.

In terms of biological role, this protein is involved in the repair of mismatches in DNA. It is possible that it carries out the mismatch recognition step. This protein has a weak ATPase activity. The sequence is that of DNA mismatch repair protein MutS from Clostridium botulinum (strain Hall / ATCC 3502 / NCTC 13319 / Type A).